The following is a 206-amino-acid chain: MSFPYEYIFKYIIIGDMGVGKSCLLHQFTENKFVPDSPHTIGVEFGTRIVDVNNKKIKLQIWDTAGQERFRAVTRSYYRGAAGALLVYDITRRITYNHLTTWLTDARNLTNPNTVIMLIGNKKDLEGQRDVTYEEASAFAKQNGLIFVESSAKTGENVEEAFLRTAKLIFQSVQEGNVDLIPDGGITKNPPQTITDKPQDASKCSC.

Position 15-22 (15-22 (GDMGVGKS)) interacts with GTP. The Effector region motif lies at 37–45 (SPHTIGVEF). GTP-binding positions include 63-67 (DTAGQ) and 121-124 (NKKD). Residues 182-206 (PDGGITKNPPQTITDKPQDASKCSC) form a disordered region. Polar residues predominate over residues 189–206 (NPPQTITDKPQDASKCSC). 2 S-geranylgeranyl cysteine lipidation sites follow: C204 and C206. Residue C206 is modified to Cysteine methyl ester.

This sequence belongs to the small GTPase superfamily. Rab family.

The protein resides in the endosome. It is found in the contractile vacuole. Its subcellular location is the membrane. The enzyme catalyses GTP + H2O = GDP + phosphate + H(+). Rab activation is generally mediated by a guanine exchange factor (GEF), while inactivation through hydrolysis of bound GTP is catalyzed by a GTPase activating protein (GAP). That Rab is activated by the DENND6A and DENND6B guanine exchange factors (GEF). In terms of biological role, the small GTPases Rab are key regulators of intracellular membrane trafficking, from the formation of transport vesicles to their fusion with membranes. Rabs cycle between an inactive GDP-bound form and an active GTP-bound form that is able to recruit to membranes different set of downstream effectors directly responsible for vesicle formation, movement, tethering and fusion. Regulates the fusion of phagosomes and lysosomes. The polypeptide is Ras-related protein Rab-14 (rab14) (Dictyostelium discoideum (Social amoeba)).